Consider the following 201-residue polypeptide: Probable GTP-binding protein EngB (201 aa).

One can recognise an EngB-type G domain in the interval 21–191 (PEAQIALAGR…WQELARAAGV (171 aa)). GTP contacts are provided by residues 29–36 (GRSNVGKS), 56–60 (GKTRS), 75–78 (DLPG), 142–145 (TKAD), and 168–172 (VLTSS). Residues serine 36 and threonine 58 each coordinate Mg(2+).

The protein belongs to the TRAFAC class TrmE-Era-EngA-EngB-Septin-like GTPase superfamily. EngB GTPase family. Mg(2+) serves as cofactor.

Its function is as follows. Necessary for normal cell division and for the maintenance of normal septation. The polypeptide is Probable GTP-binding protein EngB (Desulfovibrio desulfuricans (strain ATCC 27774 / DSM 6949 / MB)).